The following is a 252-amino-acid chain: Imidazole glycerol phosphate synthase subunit HisF (252 aa).

Active-site residues include D11 and D130.

The protein belongs to the HisA/HisF family. As to quaternary structure, heterodimer of HisH and HisF.

Its subcellular location is the cytoplasm. It catalyses the reaction 5-[(5-phospho-1-deoxy-D-ribulos-1-ylimino)methylamino]-1-(5-phospho-beta-D-ribosyl)imidazole-4-carboxamide + L-glutamine = D-erythro-1-(imidazol-4-yl)glycerol 3-phosphate + 5-amino-1-(5-phospho-beta-D-ribosyl)imidazole-4-carboxamide + L-glutamate + H(+). Its pathway is amino-acid biosynthesis; L-histidine biosynthesis; L-histidine from 5-phospho-alpha-D-ribose 1-diphosphate: step 5/9. In terms of biological role, IGPS catalyzes the conversion of PRFAR and glutamine to IGP, AICAR and glutamate. The HisF subunit catalyzes the cyclization activity that produces IGP and AICAR from PRFAR using the ammonia provided by the HisH subunit. This Petrotoga mobilis (strain DSM 10674 / SJ95) protein is Imidazole glycerol phosphate synthase subunit HisF.